Reading from the N-terminus, the 180-residue chain is Small ribosomal subunit protein uS4 (180 aa).

The S4 RNA-binding domain maps to arginine 103–histidine 165.

It belongs to the universal ribosomal protein uS4 family. Part of the 30S ribosomal subunit. Contacts protein S5. The interaction surface between S4 and S5 is involved in control of translational fidelity.

In terms of biological role, one of the primary rRNA binding proteins, it binds directly to 16S rRNA where it nucleates assembly of the body of the 30S subunit. Functionally, with S5 and S12 plays an important role in translational accuracy. In Thermococcus gammatolerans (strain DSM 15229 / JCM 11827 / EJ3), this protein is Small ribosomal subunit protein uS4.